The sequence spans 152 residues: Actin-depolymerizing factor 2, isoform c (152 aa).

Residues 4 to 147 (GVKVDPSCKN…DEKSVKSDLM (144 aa)) form the ADF-H domain.

It belongs to the actin-binding proteins ADF family.

In terms of biological role, depolymerizes growing actin filaments in muscle cells; required for the assembly of actin filaments into the functional contractile myofilament lattice of muscle. This Caenorhabditis elegans protein is Actin-depolymerizing factor 2, isoform c.